A 664-amino-acid chain; its full sequence is Metal-nicotianamine transporter YSL2 (664 aa).

The next 14 membrane-spanning stretches (helical) occupy residues 31-51 (ITVRAIVASLLIGIVYSVICL), 55-75 (LTTGLVPNLNISSALLAFVFL), 103-123 (CAVACYSISLAGGFASYLLGL), 147-167 (GVGWMTSFLFVTSFIGLVVLV), 209-229 (GFIKSFGLSFFWAFFGWFYSG), 268-288 (LVNLSLLFGAILSWGIMWPLI), 314-334 (FICIALILGDGLYNFVKILFF), 378-398 (IPLWMACVGYLFFSLVSIIAI), 409-429 (FVLVAYLLAPSLSFCNAYGAG), 457-477 (VVAGMVACGLIKSIVSVSADL), 496-516 (VAQAIGTAIGCVVAPLTFFLF), 549-569 (SALPKHCLELCYGFFAFAVAA), 594-614 (FLVGGSFAIDMCIGSLVVYVW), and 629-649 (VASGLICGDGLWILPSSLLAL).

The protein belongs to the YSL (TC 2.A.67.2) family. As to expression, expressed in roots, leaves and weakly in shoots. Restricted to the veins, to the central cylinder of the young roots and to the pericycle and the endodermis cells facing the meta-xylem tubes in older roots. Expressed in the vasculature of sepals, petals, anthers, stigma and siliques, but not in developing seeds or in meristematic zones.

It localises to the cell membrane. May be involved in the lateral transport of nicotianamine-chelated metals in the vasculature. The polypeptide is Metal-nicotianamine transporter YSL2 (YSL2) (Arabidopsis thaliana (Mouse-ear cress)).